The sequence spans 108 residues: U-scoloptoxin(10)-Sm1a (108 aa).

The N-terminal stretch at 1-24 (MNKQWLHFFSVLLLCYVIEETCSL) is a signal peptide.

It belongs to the scoloptoxin-10 family. In terms of processing, contains 3 disulfide bonds. As to expression, expressed by the venom gland.

The protein resides in the secreted. This is U-scoloptoxin(10)-Sm1a from Scolopendra morsitans (Tanzanian blue ringleg centipede).